We begin with the raw amino-acid sequence, 161 residues long: 2-C-methyl-D-erythritol 2,4-cyclodiphosphate synthase (161 aa).

A divalent metal cation contacts are provided by D10 and H12. Residues 10 to 12 and 36 to 37 contribute to the 4-CDP-2-C-methyl-D-erythritol 2-phosphate site; these read DVH and HS. H44 serves as a coordination point for a divalent metal cation. 4-CDP-2-C-methyl-D-erythritol 2-phosphate-binding positions include 58–60, 63–67, and R144; these read DIG and FSDTD.

The protein belongs to the IspF family. As to quaternary structure, homotrimer. It depends on a divalent metal cation as a cofactor.

The enzyme catalyses 4-CDP-2-C-methyl-D-erythritol 2-phosphate = 2-C-methyl-D-erythritol 2,4-cyclic diphosphate + CMP. It participates in isoprenoid biosynthesis; isopentenyl diphosphate biosynthesis via DXP pathway; isopentenyl diphosphate from 1-deoxy-D-xylulose 5-phosphate: step 4/6. In terms of biological role, involved in the biosynthesis of isopentenyl diphosphate (IPP) and dimethylallyl diphosphate (DMAPP), two major building blocks of isoprenoid compounds. Catalyzes the conversion of 4-diphosphocytidyl-2-C-methyl-D-erythritol 2-phosphate (CDP-ME2P) to 2-C-methyl-D-erythritol 2,4-cyclodiphosphate (ME-CPP) with a corresponding release of cytidine 5-monophosphate (CMP). This chain is 2-C-methyl-D-erythritol 2,4-cyclodiphosphate synthase, found in Burkholderia lata (strain ATCC 17760 / DSM 23089 / LMG 22485 / NCIMB 9086 / R18194 / 383).